A 404-amino-acid chain; its full sequence is Coenzyme F(430) synthetase (404 aa).

112–117 (GVKGKT) lines the ATP pocket.

Belongs to the MurCDEF family.

It carries out the reaction 15,17(3)-seco-F430-17(3)-acid + ATP = coenzyme F430 + ADP + phosphate. Involved in the biosynthesis of the unique nickel-containing tetrapyrrole coenzyme F430, the prosthetic group of methyl-coenzyme M reductase (MCR), which plays a key role in methanogenesis and anaerobic methane oxidation. Catalyzes the activation the g-propionate side chain of 15,17(3)-seco-F430-17(3)-acid (seco-F430) for intramolecular C-C bond formation to yield the carbocyclic F ring of coenzyme F430. The sequence is that of Coenzyme F(430) synthetase from Methanocaldococcus jannaschii (strain ATCC 43067 / DSM 2661 / JAL-1 / JCM 10045 / NBRC 100440) (Methanococcus jannaschii).